We begin with the raw amino-acid sequence, 61 residues long: MAKKSLIAKQKKHQKFAVREYTRCVRCGRPHAVNRKFGVCRLCFRDLAYAGAIPGIKKASW.

Zn(2+)-binding residues include cysteine 24, cysteine 27, cysteine 40, and cysteine 43.

This sequence belongs to the universal ribosomal protein uS14 family. Zinc-binding uS14 subfamily. Part of the 30S ribosomal subunit. Contacts proteins S3 and S10. Requires Zn(2+) as cofactor.

Its function is as follows. Binds 16S rRNA, required for the assembly of 30S particles and may also be responsible for determining the conformation of the 16S rRNA at the A site. This Ureaplasma parvum serovar 3 (strain ATCC 27815 / 27 / NCTC 11736) protein is Small ribosomal subunit protein uS14.